The sequence spans 239 residues: MRVFVILPAAGLGTRMAAGSHTPHQPKQFLELEGVPVLIHTLRAFAAVPAVSAMIVAVRPNEIERVQAQVNEYGFQDKVRVVAGGDSRQQSVSRALATVECDASDIVLVHDAVRPLIEPAVIARTIEAVEKSGAAIVGLPAVDTIKQVERTAAGAIITATIPREYIVQAQTPQGFRCELLRRAFAEAEADGFTGTDEASLVERAGAQVTVVPGSPSNMKITQPGDLELAAFYLRQRSSR.

It belongs to the IspD/TarI cytidylyltransferase family. IspD subfamily.

The catalysed reaction is 2-C-methyl-D-erythritol 4-phosphate + CTP + H(+) = 4-CDP-2-C-methyl-D-erythritol + diphosphate. The protein operates within isoprenoid biosynthesis; isopentenyl diphosphate biosynthesis via DXP pathway; isopentenyl diphosphate from 1-deoxy-D-xylulose 5-phosphate: step 2/6. Catalyzes the formation of 4-diphosphocytidyl-2-C-methyl-D-erythritol from CTP and 2-C-methyl-D-erythritol 4-phosphate (MEP). The chain is 2-C-methyl-D-erythritol 4-phosphate cytidylyltransferase from Acidobacterium capsulatum (strain ATCC 51196 / DSM 11244 / BCRC 80197 / JCM 7670 / NBRC 15755 / NCIMB 13165 / 161).